A 166-amino-acid polypeptide reads, in one-letter code: Cofilin-1 (166 aa).

Residue alanine 2 is modified to N-acetylalanine. Phosphoserine is present on residues serine 3 and serine 8. The 150-residue stretch at 4–153 (GVAVSDGVIK…KDRCTLAEKL (150 aa)) folds into the ADF-H domain. Lysine 13 carries the N6-acetyllysine modification. Threonine 25 carries the phosphothreonine modification. The Nuclear localization signal signature appears at 30–34 (KKRKK). Serine 41 carries the phosphoserine modification. Tyrosine 68 carries the post-translational modification Phosphotyrosine. At lysine 73 the chain carries N6-acetyllysine. Lysine 132 is covalently cross-linked (Glycyl lysine isopeptide (Lys-Gly) (interchain with G-Cter in SUMO2)). Tyrosine 140 is modified (phosphotyrosine). Lysine 144 carries the post-translational modification N6-acetyllysine. Serine 156 is subject to Phosphoserine.

It belongs to the actin-binding proteins ADF family. Can bind G- and F-actin in a 1:1 ratio of cofilin to actin. It is a major component of intranuclear and cytoplasmic actin rods. Interacts with the subcortical maternal complex (SCMC) via interaction with TLE6 and NLRP5. Interacts with C9orf72. In terms of processing, inactivated by phosphorylation on Ser-3. Phosphorylated on Ser-3 in resting cells. Dephosphorylated by PDXP/chronophin; this restores its activity in promoting actin filament depolymerization. The phosphorylation of Ser-24 may prevent recognition of the nuclear localization signal. Phosphorylated via a ARRB1-RAC1-LIMK1-PAK1 cascade upon active ligand stimulation of atypical chemokine receptor ACKR2.

Its subcellular location is the nucleus matrix. The protein localises to the cytoplasm. It is found in the cytoskeleton. It localises to the cell projection. The protein resides in the ruffle membrane. Its subcellular location is the lamellipodium membrane. The protein localises to the lamellipodium. It is found in the growth cone. It localises to the axon. Its function is as follows. Binds to F-actin and exhibits pH-sensitive F-actin depolymerizing activity. Important for normal progress through mitosis and normal cytokinesis. In conjunction with the subcortical maternal complex (SCMC), plays an essential role for zygotes to progress beyond the first embryonic cell divisions via regulation of actin dynamics. Required for the centralization of the mitotic spindle and symmetric division of zygotes. Plays a role in the regulation of cell morphology and cytoskeletal organization in epithelial cells. Required for the up-regulation of atypical chemokine receptor ACKR2 from endosomal compartment to cell membrane, increasing its efficiency in chemokine uptake and degradation. Required for neural tube morphogenesis and neural crest cell migration. The polypeptide is Cofilin-1 (Cfl1) (Rattus norvegicus (Rat)).